The primary structure comprises 409 residues: Glutamate--tRNA ligase 2 (409 aa).

A 'HIGH' region motif is present at residues Pro-9–Gly-19. The 'KMSKS' region signature appears at Lys-198–Arg-202. Lys-201 provides a ligand contact to ATP.

Belongs to the class-I aminoacyl-tRNA synthetase family. Glutamate--tRNA ligase type 1 subfamily. In terms of assembly, monomer.

It localises to the cytoplasm. The catalysed reaction is tRNA(Glu) + L-glutamate + ATP = L-glutamyl-tRNA(Glu) + AMP + diphosphate. Functionally, catalyzes the attachment of glutamate to tRNA(Glu) in a two-step reaction: glutamate is first activated by ATP to form Glu-AMP and then transferred to the acceptor end of tRNA(Glu). The sequence is that of Glutamate--tRNA ligase 2 from Neorickettsia sennetsu (strain ATCC VR-367 / Miyayama) (Ehrlichia sennetsu).